The following is a 359-amino-acid chain: Epoxide hydrolase 4 (359 aa).

Residues 15–35 (ALLYWSLVYGYCGLCASVHLL) form a helical; Signal-anchor for type II membrane protein membrane-spanning segment. In terms of domain architecture, AB hydrolase-1 spans 92–337 (PLMLLLHGFP…ILSEGSHWLQ (246 aa)). Asp167 functions as the Nucleophile in the catalytic mechanism. Tyr279 functions as the Proton donor in the catalytic mechanism. Residue His334 is the Proton acceptor of the active site.

This sequence belongs to the AB hydrolase superfamily. Epoxide hydrolase family.

Its subcellular location is the membrane. The protein is Epoxide hydrolase 4 (Ephx4) of Mus musculus (Mouse).